Consider the following 286-residue polypeptide: Citrullinase (286 aa).

In terms of domain architecture, CN hydrolase spans 4–258; sequence IKVAVVQLSF…DDILYATFDF (255 aa). Glu43 acts as the Proton acceptor in catalysis. Lys116 is a catalytic residue. The active-site Nucleophile is Cys153.

Belongs to the carbon-nitrogen hydrolase superfamily.

It carries out the reaction L-citrulline + H2O + 2 H(+) = L-ornithine + NH4(+) + CO2. Catalyzes the degradation of citrulline into ornithine, carbon dioxide and ammonia. Contributes to intramacrophage survival, in vivo growth and pathogenesis. The chain is Citrullinase from Francisella tularensis subsp. tularensis (strain SCHU S4 / Schu 4).